The sequence spans 299 residues: Non-structural protein V (299 aa).

Residues 40-91 (SDNPGQERATYKEEKAGGSGLSKPCLSAIGSTEGGAPRIRGQGSGESDDDTE) are disordered. The interval 110-120 (HYVYDHSGEAV) is interaction with host STAT1. The tract at residues 133-163 (SGLDGDSTLSEGDNESENSDVDIGEPDTEGY) is disordered. The span at 144–160 (GDNESENSDVDIGEPDT) shows a compositional bias: acidic residues. Residues His-232, Cys-251, Cys-255, Cys-267, Cys-269, Cys-272, Cys-276, and Cys-279 each coordinate Zn(2+).

It belongs to the paramyxoviruses V protein family. In terms of assembly, interacts with host IFIH1/MDA5 and DHX58/LGP2; these interactions are involved in the inhibition of the host type I interferon signaling pathway. Interacts with host TYK2; this interaction inhibits the type I interferon signaling pathway without affecting the type II pathway. Interacts with host IRF7; this interaction inhibits IRF7 translocation to the nucleus. Interacts with host CHUK. Interacts with host RELA/p65; this interaction inhibits the nuclear translocation of NF-KappaB. Interacts (via N-terminus) with host STAT1 and JAK1; these interactions inhibit STAT1 phosphorylation by Jak1 and thereby the type I interferon signaling pathway. Interacts (via C-terminus) with host STAT2; this interaction is involved in the inhibition of the host type I interferon signaling pathway. Forms a complex with host PPP1CA and PPP1CC; this interaction prevents dephosphorylation of host IFIH1/MDA5 and leads to the inhibition of the host type I interferon signaling pathway. Interacts with host IRF9; this interaction prevents the binding of IRF9 to STAT2 and thereby the type I interferon signaling pathway. Interacts with host RIGI regulatory protein (via CARDs domain) and host TRIM25 (via SPRY domain); these interactions prevent TRIM25-mediated ubiquitination of RIG-I and disrupts downstream RIG-I signaling.

Its subcellular location is the host cytoplasm. Functionally, plays an essential role in the inhibition of host immune response. Prevents the establishment of cellular antiviral state by blocking interferon-alpha/beta (IFN-alpha/beta) production and signaling pathway. Interacts with host IFIH1/MDA5 and DHX58/LGP2 to inhibit the transduction pathway involved in the activation of IFN-beta promoter, thus protecting the virus against cell antiviral state. Blocks the type I interferon signaling pathway by interacting with host TYK2 and thereby inhibiting downstream STAT1 and STAT2 phosphorylation. Blocks the type I interferon signaling pathway by disrupting the RIG-I signaling pathway. Moderately affects the type II interferon signaling. Prevents PP1alpha/gamma-mediated dephosphorylation of host IFIH1/MDA5 and thus blocks its activation. The protein is Non-structural protein V (P/V) of Homo sapiens (Human).